A 254-amino-acid chain; its full sequence is NAD-dependent protein deacylase 2 (254 aa).

A Deacetylase sirtuin-type domain is found at 1–254 (MDEHSIMQAV…LPALVRRLGV (254 aa)). 24 to 44 (GAGMSADSGLETYRDPETGVW) contributes to the NAD(+) binding site. Tyrosine 69 and arginine 72 together coordinate substrate. Position 105–108 (105–108 (QNID)) interacts with NAD(+). The active-site Proton acceptor is the histidine 123. Zn(2+)-binding residues include cysteine 131, cysteine 134, cysteine 157, and cysteine 160. NAD(+)-binding positions include 197–199 (GTS) and alanine 241.

The protein belongs to the sirtuin family. Class III subfamily. The cofactor is Zn(2+).

The protein localises to the cytoplasm. The enzyme catalyses N(6)-acetyl-L-lysyl-[protein] + NAD(+) + H2O = 2''-O-acetyl-ADP-D-ribose + nicotinamide + L-lysyl-[protein]. It catalyses the reaction N(6)-succinyl-L-lysyl-[protein] + NAD(+) + H2O = 2''-O-succinyl-ADP-D-ribose + nicotinamide + L-lysyl-[protein]. In terms of biological role, NAD-dependent lysine deacetylase and desuccinylase that specifically removes acetyl and succinyl groups on target proteins. Modulates the activities of several proteins which are inactive in their acylated form. This chain is NAD-dependent protein deacylase 2, found in Corynebacterium efficiens (strain DSM 44549 / YS-314 / AJ 12310 / JCM 11189 / NBRC 100395).